The primary structure comprises 190 residues: Probable thymidylate kinase (190 aa).

Residue 9 to 16 (GIDGAGKT) coordinates ATP.

The protein belongs to the thymidylate kinase family.

The catalysed reaction is dTMP + ATP = dTDP + ADP. The chain is Probable thymidylate kinase (tmk1) from Sulfurisphaera tokodaii (strain DSM 16993 / JCM 10545 / NBRC 100140 / 7) (Sulfolobus tokodaii).